The primary structure comprises 278 residues: 4-deoxy-L-threo-5-hexosulose-uronate ketol-isomerase (278 aa).

Zn(2+) contacts are provided by His196, His198, Glu203, and His245.

This sequence belongs to the KduI family. It depends on Zn(2+) as a cofactor.

The enzyme catalyses 5-dehydro-4-deoxy-D-glucuronate = 3-deoxy-D-glycero-2,5-hexodiulosonate. It functions in the pathway glycan metabolism; pectin degradation; 2-dehydro-3-deoxy-D-gluconate from pectin: step 4/5. Functionally, catalyzes the isomerization of 5-dehydro-4-deoxy-D-glucuronate to 3-deoxy-D-glycero-2,5-hexodiulosonate. The sequence is that of 4-deoxy-L-threo-5-hexosulose-uronate ketol-isomerase from Shigella sonnei (strain Ss046).